A 384-amino-acid polypeptide reads, in one-letter code: Glycerol 3-phosphate oxidase (384 aa).

A signal peptide spans 1 to 15; sequence METRDVLIVGGGVIG. FAD is bound at residue I14. Residue C16 is the site of N-palmitoyl cysteine attachment. C16 carries S-diacylglycerol cysteine lipidation. Residues E33, 42-43, and 47-49 contribute to the FAD site; these read TS and SGV. Sn-glycerol 3-phosphate-binding residues include S47 and H51. H51 (proton acceptor) is an active-site residue. V177 contributes to the FAD binding site. Sn-glycerol 3-phosphate contacts are provided by K258 and R320. FAD is bound at residue 346–347; it reads MK. Sn-glycerol 3-phosphate is bound at residue S348. T352 contributes to the FAD binding site.

Monomer. FAD serves as cofactor.

Its subcellular location is the cytoplasm. The protein resides in the cell membrane. The enzyme catalyses sn-glycerol 3-phosphate + O2 = dihydroxyacetone phosphate + H2O2. It functions in the pathway polyol metabolism; glycerol degradation via glycerol kinase pathway; glycerone phosphate from sn-glycerol 3-phosphate (aerobic route): step 1/1. In terms of biological role, catalyzes the oxidation of glycerol 3-phosphate to dihydroxyacetone phosphate (DHAP), with a reduction of O2 to H2O2. The formation of hydrogen peroxide by this enzyme is crucial for cytotoxic effects of M.pneumoniae on host cells. Is involved in the metabolism of glycerol and is essential for glycerol utilization; glycerol is one of the few carbon sources that can be utilized by M.pneumoniae for growth. To a lesser extent, is also able to use glyceraldehyde 3-phosphate (GAP), an intermediate in the glycolysis pathway, as a substrate (but the structure of the product has not been elucidated). Therefore, in the absence of glycerol, GAP may serve as a substrate in the GlpO reaction to supply H2O2 during mycoplasma infection. Does not show any dehydrogenase activity with NAD(+). The polypeptide is Glycerol 3-phosphate oxidase (Mycoplasma pneumoniae (strain ATCC 29342 / M129 / Subtype 1) (Mycoplasmoides pneumoniae)).